The following is a 145-amino-acid chain: 3-dehydroquinate dehydratase (145 aa).

The active-site Proton acceptor is Tyr-22. Asn-73, His-79, and Asp-86 together coordinate substrate. Residue His-99 is the Proton donor of the active site. Residues 100–101 and Arg-110 contribute to the substrate site; that span reads LS.

It belongs to the type-II 3-dehydroquinase family. In terms of assembly, homododecamer.

The enzyme catalyses 3-dehydroquinate = 3-dehydroshikimate + H2O. It participates in metabolic intermediate biosynthesis; chorismate biosynthesis; chorismate from D-erythrose 4-phosphate and phosphoenolpyruvate: step 3/7. Catalyzes a trans-dehydration via an enolate intermediate. This chain is 3-dehydroquinate dehydratase, found in Prochlorococcus marinus (strain NATL1A).